Reading from the N-terminus, the 324-residue chain is Putative ribose-phosphate pyrophosphokinase 1 (324 aa).

ATP-binding positions include 43–45 (DGE) and 102–103 (RQ). A Mg(2+)-binding site is contributed by His-136. D-ribose 5-phosphate contacts are provided by residues Asp-225 and 229–233 (NTGQT).

This sequence belongs to the ribose-phosphate pyrophosphokinase family. Class I subfamily. As to quaternary structure, homohexamer. It depends on Mg(2+) as a cofactor.

The protein resides in the cytoplasm. The enzyme catalyses D-ribose 5-phosphate + ATP = 5-phospho-alpha-D-ribose 1-diphosphate + AMP + H(+). It functions in the pathway metabolic intermediate biosynthesis; 5-phospho-alpha-D-ribose 1-diphosphate biosynthesis; 5-phospho-alpha-D-ribose 1-diphosphate from D-ribose 5-phosphate (route I): step 1/1. In terms of biological role, involved in the biosynthesis of the central metabolite phospho-alpha-D-ribosyl-1-pyrophosphate (PRPP) via the transfer of pyrophosphoryl group from ATP to 1-hydroxyl of ribose-5-phosphate (Rib-5-P). The chain is Putative ribose-phosphate pyrophosphokinase 1 from Enterococcus faecalis (strain ATCC 700802 / V583).